A 155-amino-acid chain; its full sequence is Transcriptional repressor NrdR (155 aa).

A zinc finger spans residues cysteine 3 to cysteine 34. Residues proline 49–glutamate 139 enclose the ATP-cone domain.

It belongs to the NrdR family. It depends on Zn(2+) as a cofactor.

Negatively regulates transcription of bacterial ribonucleotide reductase nrd genes and operons by binding to NrdR-boxes. The chain is Transcriptional repressor NrdR from Teredinibacter turnerae (strain ATCC 39867 / T7901).